Reading from the N-terminus, the 313-residue chain is MKKLVIATRGSQLALWQSNHIKAILQEQNPGLEVELNVIVTTGDRIQDKALSKIGGKGLFLKELEEAMLQGEAQIAVHSLKDVPTVMPDGLILAAITEREDSRDALLSEKYANIDALPKNAVVGTSSLRRRMQIQKLRPDLIIKDLRGNVDTRIRKLKEGEFDAIILAAAGINRLSLLDAVKHVYPISLEEMVPSMGQGALGIEAVNDAEVLRIVAGLEDEYSRIETTIERSFVDELEGGCQVPIGVNASVLDDGTISIRAVLGLPNGEEMLSDSKITSKKDYENIGREIAAEFIEKGAKELLSRAEAMMENK.

Residue cysteine 241 is modified to S-(dipyrrolylmethanemethyl)cysteine.

The protein belongs to the HMBS family. As to quaternary structure, monomer. Dipyrromethane serves as cofactor.

It carries out the reaction 4 porphobilinogen + H2O = hydroxymethylbilane + 4 NH4(+). The protein operates within porphyrin-containing compound metabolism; protoporphyrin-IX biosynthesis; coproporphyrinogen-III from 5-aminolevulinate: step 2/4. Its function is as follows. Tetrapolymerization of the monopyrrole PBG into the hydroxymethylbilane pre-uroporphyrinogen in several discrete steps. In Sulfurimonas denitrificans (strain ATCC 33889 / DSM 1251) (Thiomicrospira denitrificans (strain ATCC 33889 / DSM 1251)), this protein is Porphobilinogen deaminase.